Consider the following 328-residue polypeptide: E3 ubiquitin-protein ligase SINA-like 5 (328 aa).

The segment at 1–77 (MARSGGNDGH…GSPKSSQPVK (77 aa)) is disordered. Composition is skewed to acidic residues over residues 10 to 20 (HEEELDPELFE) and 27 to 62 (GYED…ENVT). The span at 63 to 77 (TDEQSGSPKSSQPVK) shows a compositional bias: polar residues. The RING-type; degenerate zinc-finger motif lies at 86-122 (CPTCCEPLKRPIYQCSNGHLACSSCCQKLNKKCSFCR). The interval 136–324 (VIEASIVPCP…MQICIAYGYK (189 aa)) is SBD. The SIAH-type; degenerate zinc-finger motif lies at 139 to 197 (ASIVPCPNAKHGCKETTTYCNQSSHEKVCKFVRCSCPVSNCNYVSSYSNLKSHACSTAH). Zn(2+) contacts are provided by C144, C151, H163, C167, C174, C179, H191, and H197.

This sequence belongs to the SINA (Seven in absentia) family.

It catalyses the reaction S-ubiquitinyl-[E2 ubiquitin-conjugating enzyme]-L-cysteine + [acceptor protein]-L-lysine = [E2 ubiquitin-conjugating enzyme]-L-cysteine + N(6)-ubiquitinyl-[acceptor protein]-L-lysine.. It participates in protein modification; protein ubiquitination. Functionally, E3 ubiquitin-protein ligase that mediates ubiquitination and subsequent proteasomal degradation of target proteins. E3 ubiquitin ligases accept ubiquitin from an E2 ubiquitin-conjugating enzyme in the form of a thioester and then directly transfers the ubiquitin to targeted substrates. It probably triggers the ubiquitin-mediated degradation of different substrates. The chain is E3 ubiquitin-protein ligase SINA-like 5 from Arabidopsis thaliana (Mouse-ear cress).